Consider the following 725-residue polypeptide: N-alpha-acetyltransferase 35, NatC auxiliary subunit (725 aa).

Residues 548 to 573 are disordered; the sequence is ERIMEEQQKGRSSKKTKKKKKVRPLS. Over residues 558–571 the composition is skewed to basic residues; the sequence is RSSKKTKKKKKVRP.

It belongs to the MAK10 family. Component of the N-terminal acetyltransferase C (NatC) complex, which is composed of NAA35, NAA38 and NAA30. In terms of tissue distribution, expressed in primary spermatocytes, basal epidermis, interstitial fibroblasts of skeletal muscle, and intestinal crypts.

The protein localises to the cytoplasm. Auxillary component of the N-terminal acetyltransferase C (NatC) complex which catalyzes acetylation of N-terminal methionine residues. N-terminal acetylation protects proteins from ubiquitination and degradation by the N-end rule pathway. Involved in regulation of apoptosis and proliferation of smooth muscle cells. The chain is N-alpha-acetyltransferase 35, NatC auxiliary subunit (Naa35) from Rattus norvegicus (Rat).